Here is a 1547-residue protein sequence, read N- to C-terminus: ABC multidrug transporter atrF (1547 aa).

Disordered stretches follow at residues 1-66 (MADG…RRGA) and 85-123 (TRSV…IDGD). Over residues 10-19 (SATSTTMETN) the composition is skewed to polar residues. The span at 36–47 (SSSMTATSSELS) shows a compositional bias: low complexity. The segment covering 51–66 (RWGERDQGEPVSRRGA) has biased composition (basic and acidic residues). Residues 111–123 (KAIDEEDSTIDGD) are compositionally biased toward acidic residues. One can recognise an ABC transporter 1 domain in the interval 197–439 (IPQLRFGKQP…FVNLGFHCPE (243 aa)). Residues Asn-299 and Asn-363 are each glycosylated (N-linked (GlcNAc...) asparagine). A run of 7 helical transmembrane segments spans residues 552–572 (LYTK…LFYG), 586–606 (ALFF…MPAV), 635–655 (FPAI…MTGL), 657–677 (VTAS…FSIT), 698–718 (GIAL…QGLI), 722–742 (IWFG…AVLT), and 804–824 (FGVV…AAEF). Residues 892–1130 (FTWSNVEYTV…DVIKYFADRG (239 aa)) enclose the ABC transporter 2 domain. An N-linked (GlcNAc...) asparagine glycan is attached at Asn-905. 928 to 935 (GASGAGKT) contacts ATP. Asn-980 and Asn-999 each carry an N-linked (GlcNAc...) asparagine glycan. 8 consecutive transmembrane segments (helical) span residues 1230–1250 (FVSV…GNSI), 1260–1280 (IFLI…KFYI), 1309–1329 (IPMA…PVGF), 1334–1354 (STAG…SSWG), 1356–1376 (WICA…FFFV), 1397–1417 (YWMY…SSIF), 1491–1511 (CFGI…FFIY), and 1520–1540 (FGMG…KGVF).

This sequence belongs to the ABC transporter superfamily. ABCG family. PDR (TC 3.A.1.205) subfamily.

The protein resides in the cell membrane. The catalysed reaction is voriconazole(in) + ATP + H2O = voriconazole(out) + ADP + phosphate + H(+). It carries out the reaction fluconazole(in) + ATP + H2O = fluconazole(out) + ADP + phosphate + H(+). Functionally, pleiotropic ABC efflux transporter involved in the basal level of azole susceptibility. Confers resistance to fluconazole and voriconazole. This is ABC multidrug transporter atrF from Aspergillus fumigatus (strain ATCC MYA-4609 / CBS 101355 / FGSC A1100 / Af293) (Neosartorya fumigata).